A 467-amino-acid chain; its full sequence is MRASWVESRRGQANVSQMHFARQGVVTEEMAYVAKRENLPESLVMEEVARGRMIIPANINHTGLEPMAIGIASKCKVNANIGASPNASDAAEEVNKLKLAVKYGADTVMDLSTGGVNLDEVRTAIIDASPVPIGTVPVYQALESVHGSIEKLDEDDFLHIIEKHCQQGVDYQTIHAGLLIEHLPKVKGRLTGIVSRGGGILAQWMLYHHRQNPLFTRFDDICEIFKRYDCTFSLGDSLRPGCQHDASDAAQLAELKTLGELTRRAWAHDVQVMVEGPGHVPLDQIEFNVKKQMEECSEAPFYVLGPLVTDIAPGYDHITSAIGAAMAGWHGTAMLCYVTPKEHLGLPNAEDVREGLIAYKIAAHAADIARHRPGARDRDDELSRARYNFDWNKQFELSLDPERAKEYHDETLPADIYKQAEFCSMCGPKHCPMQTKITDEDLEGLEKVLETKSGAADLAGVKMEKES.

Substrate is bound by residues Asn80, Met109, Tyr139, His175, Ser195–Gly197, Asp236–Arg239, and Glu275. A Zn(2+)-binding site is contributed by His279. Position 302 (Tyr302) interacts with substrate. Position 343 (His343) interacts with Zn(2+). Residues Cys423, Cys426, and Cys431 each coordinate [4Fe-4S] cluster.

Belongs to the ThiC family. The cofactor is [4Fe-4S] cluster.

It carries out the reaction 5-amino-1-(5-phospho-beta-D-ribosyl)imidazole + S-adenosyl-L-methionine = 4-amino-2-methyl-5-(phosphooxymethyl)pyrimidine + CO + 5'-deoxyadenosine + formate + L-methionine + 3 H(+). Its pathway is cofactor biosynthesis; thiamine diphosphate biosynthesis. In terms of biological role, catalyzes the synthesis of the hydroxymethylpyrimidine phosphate (HMP-P) moiety of thiamine from aminoimidazole ribotide (AIR) in a radical S-adenosyl-L-methionine (SAM)-dependent reaction. In Synechococcus sp. (strain WH7803), this protein is Phosphomethylpyrimidine synthase.